The chain runs to 205 residues: Ribosomal RNA small subunit methyltransferase G (205 aa).

S-adenosyl-L-methionine is bound by residues glycine 66, phenylalanine 71, 119-120 (IE), and arginine 135.

It belongs to the methyltransferase superfamily. RNA methyltransferase RsmG family.

It is found in the cytoplasm. It catalyses the reaction guanosine(527) in 16S rRNA + S-adenosyl-L-methionine = N(7)-methylguanosine(527) in 16S rRNA + S-adenosyl-L-homocysteine. In terms of biological role, specifically methylates the N7 position of guanine in position 527 of 16S rRNA. In Rhizobium johnstonii (strain DSM 114642 / LMG 32736 / 3841) (Rhizobium leguminosarum bv. viciae), this protein is Ribosomal RNA small subunit methyltransferase G.